The primary structure comprises 202 residues: Imidazoleglycerol-phosphate dehydratase (202 aa).

Belongs to the imidazoleglycerol-phosphate dehydratase family.

The protein localises to the cytoplasm. It catalyses the reaction D-erythro-1-(imidazol-4-yl)glycerol 3-phosphate = 3-(imidazol-4-yl)-2-oxopropyl phosphate + H2O. It functions in the pathway amino-acid biosynthesis; L-histidine biosynthesis; L-histidine from 5-phospho-alpha-D-ribose 1-diphosphate: step 6/9. The chain is Imidazoleglycerol-phosphate dehydratase from Rhodopirellula baltica (strain DSM 10527 / NCIMB 13988 / SH1).